A 275-amino-acid polypeptide reads, in one-letter code: Large ribosomal subunit protein uL2c (275 aa).

Disordered stretches follow at residues 36–56 (KNHR…HRGK) and 224–275 (VMNP…RKRK). Positions 255-275 (LGRKTRKKPKYSNRYILRKRK) are enriched in basic residues.

The protein belongs to the universal ribosomal protein uL2 family. Part of the 50S ribosomal subunit.

The protein resides in the plastid. The protein localises to the chloroplast. This is Large ribosomal subunit protein uL2c (rpl2) from Gracilaria tenuistipitata var. liui (Red alga).